The primary structure comprises 201 residues: RILP-like protein 2 (201 aa).

The region spanning 14-108 (GPEIALDKDP…LKDGPQMGVG (95 aa)) is the RH1 domain. Residues 67-155 (LEMLEALVNQ…AQDELQCYKS (89 aa)) are a coiled coil. Residues 121–197 (RPRFTLQELR…TVKSLFSFKQ (77 aa)) enclose the RH2 domain. Residues 177–201 (SPRENESKEKSTVKSLFSFKQGKQT) are disordered. A compositionally biased stretch (basic and acidic residues) spans 179–188 (RENESKEKST).

Belongs to the RILPL family.

It is found in the cytoplasm. Its subcellular location is the cytosol. The protein resides in the cytoskeleton. The protein localises to the microtubule organizing center. It localises to the centrosome. It is found in the cell projection. Its subcellular location is the cilium. Involved in cell shape and neuronal morphogenesis, positively regulating the establishment and maintenance of dendritic spines. Plays a role in cellular protein transport. This chain is RILP-like protein 2 (rilpl2), found in Xenopus tropicalis (Western clawed frog).